Here is a 92-residue protein sequence, read N- to C-terminus: Conotoxin Cal22f (92 aa).

The N-terminal stretch at 1 to 24 (MMSTKGITLFLCLLLLALATSVNG) is a signal peptide. The propeptide occupies 25–44 (GQGTRRSRMTRALHGGRPSA).

Contains 4 disulfide bonds. As to expression, expressed by the venom duct.

It is found in the secreted. Its function is as follows. Probable neurotoxin with unknown target. Possibly targets ion channels. This chain is Conotoxin Cal22f, found in Californiconus californicus (California cone).